The chain runs to 1251 residues: Botulinum neurotoxin type E (1251 aa).

His-212 contributes to the Zn(2+) binding site. Glu-213 is a catalytic residue. Positions 216 and 251 each coordinate Zn(2+). Cys-412 and Cys-426 are oxidised to a cystine. The interval 423-819 (KSICIEINNG…ELNSMVIDTL (397 aa)) is translocation domain (TD). The tract at residues 466 to 515 (NDLDQVILNFNSESAPGLSDEKLNLTIQNDAYIPKYDSNGTSDIEQHDVN) is belt. Residues 845–1067 (KRIKSSSVLN…EIQTLYNNEP (223 aa)) are N-terminus of receptor binding domain (N-RBD). Residues 1068 to 1251 (NANILKDFWG…ISEEHGWQEK (184 aa)) form a C-terminus of receptor binding domain (C-RBD) region. The short motif at 1221–1224 (STWY) is the Host ganglioside-binding motif element.

The protein belongs to the peptidase M27 family. In terms of assembly, heterodimer; disulfide-linked heterodimer of a light chain (LC) and a heavy chain (HC). The LC has the proteolytic/pharmacological activity, while the N- and C-terminal of the HC mediate channel formation and toxin binding, respectively. Interacts with host synaptic vesicle glycoproteins SV2A and SV2B which probably serve as coreceptors. The cofactor is Zn(2+).

It localises to the secreted. The protein resides in the host cytoplasm. Its subcellular location is the host cytosol. The protein localises to the host synapse. It is found in the host presynaptic cell membrane. It localises to the host cytoplasmic vesicle. The protein resides in the host secretory vesicle. Its subcellular location is the host synaptic vesicle membrane. It carries out the reaction Limited hydrolysis of proteins of the neuroexocytosis apparatus, synaptobrevins, SNAP25 or syntaxin. No detected action on small molecule substrates.. Its function is as follows. Botulinum toxin causes flaccid paralysis by inhibiting neurotransmitter (acetylcholine) release from the presynaptic membranes of nerve terminals of eukaryotic host skeletal and autonomic nervous system, with frequent heart or respiratory failure. Precursor of botulinum neurotoxin E which has 2 coreceptors; complex polysialylated gangliosides found on neural tissue and specific membrane-anchored proteins found in synaptic vesicles. Receptor proteins are exposed on host presynaptic cell membrane during neurotransmitter release, when the toxin heavy chain (HC) binds to them. Upon synaptic vesicle recycling the toxin is taken up via the endocytic pathway. When the pH of the toxin-containing endosome drops a structural rearrangement occurs so that the N-terminus of the HC forms pores that allows the light chain (LC) to translocate into the cytosol. Once in the cytosol the disulfide bond linking the 2 subunits is reduced and LC cleaves its target protein on synaptic vesicles, preventing their fusion with the cytoplasmic membrane and thus neurotransmitter release. In terms of biological role, has proteolytic activity. After translocation into the eukaryotic host cytosol, LC hydrolyzes the '180-Arg-|-Ile-181' bond in SNAP25, blocking neurotransmitter release. Responsible for host epithelial cell transcytosis, host nerve cell targeting and translocation of light chain (LC) into host cytosol. Composed of 3 subdomains; the translocation domain (TD), and N-terminus and C-terminus of the receptor-binding domain (RBD). The RBD is responsible for the adherence of the toxin to the cell surface. It simultaneously recognizes 2 coreceptors; host polysialated gangliosides and the receptor proteins SV2A and SV2B in close proximity on host synaptic vesicles. Interaction with SV2 proteins requires SV2 glycosylation. The N-terminus of the TD wraps an extended belt around the perimeter of the LC, protecting Zn(2+) in the active site; it may also prevent premature LC dissociation from the translocation channel and protect toxin prior to translocation. The TD inserts into synaptic vesicle membrane to allow translocation into the host cytosol. Binds ganglioside GD1a in vitro. This is Botulinum neurotoxin type E from Clostridium butyricum.